The following is a 534-amino-acid chain: UDP-glucuronosyltransferase 1A5 (534 aa).

The signal sequence occupies residues 1 to 28; that stretch reads MATGLQVPLPQLATGLLLLLSVQPWAES. N-linked (GlcNAc...) asparagine glycosylation is found at Asn119, Asn296, and Asn348. Residues 492-508 traverse the membrane as a helical segment; sequence VIGFLLAVVLTVAFITF.

The protein belongs to the UDP-glycosyltransferase family. Homodimer. Homooligomer. Interacts with UGT1A1, UGT1A3, UGT1A4, UGT1A6, UGT1A7, UGT1A8, UGT1A9 and UGT1A10 to form heterodimers. Isoform 1 interacts with isoform 2/i2 suggesting that oligomerization is involved in negative regulation of transferase activity by isoform 2. Isoform 1 also interacts with respective i2 isoforms of UGT1A1, UGT1A3, UGT1A4, UGT1A6, UGT1A7, UGT1A8, UGT1A9 and UGT1A10. Isoform 1 and isoform 2 are expressed in colon and small intestine. Neither isoform is expressed in liver, kidney or esophagus.

The protein localises to the endoplasmic reticulum membrane. The enzyme catalyses glucuronate acceptor + UDP-alpha-D-glucuronate = acceptor beta-D-glucuronoside + UDP + H(+). The catalysed reaction is zolasartan + UDP-alpha-D-glucuronate = zolarsartan-1-N-beta-D-glucuronide + UDP. UDP-glucuronosyltransferase (UGT) that catalyzes phase II biotransformation reactions in which lipophilic substrates are conjugated with glucuronic acid to increase the metabolite's water solubility, thereby facilitating excretion into either the urine or bile. Essential for the elimination and detoxification of drugs, xenobiotics and endogenous compounds. Involved in the glucuronidation of the AGTR1 angiotensin receptor antagonist zolarsatan, a drug which can inhibit the effect of angiotensin II. In terms of biological role, lacks UGT glucuronidation activity but acts as a negative regulator of isoform 1. This chain is UDP-glucuronosyltransferase 1A5, found in Homo sapiens (Human).